The primary structure comprises 201 residues: Large ribosomal subunit protein uL4 (201 aa).

Residues 45–66 (AQLTRSEVSGGGKKPWRQKGTG) form a disordered region.

This sequence belongs to the universal ribosomal protein uL4 family. Part of the 50S ribosomal subunit.

One of the primary rRNA binding proteins, this protein initially binds near the 5'-end of the 23S rRNA. It is important during the early stages of 50S assembly. It makes multiple contacts with different domains of the 23S rRNA in the assembled 50S subunit and ribosome. In terms of biological role, forms part of the polypeptide exit tunnel. The protein is Large ribosomal subunit protein uL4 of Aeromonas salmonicida (strain A449).